Here is a 238-residue protein sequence, read N- to C-terminus: Probable septum site-determining protein MinC (238 aa).

The protein belongs to the MinC family. In terms of assembly, interacts with MinD and FtsZ.

Its function is as follows. Cell division inhibitor that blocks the formation of polar Z ring septums. Rapidly oscillates between the poles of the cell to destabilize FtsZ filaments that have formed before they mature into polar Z rings. Prevents FtsZ polymerization. The chain is Probable septum site-determining protein MinC from Aeromonas salmonicida (strain A449).